The primary structure comprises 345 residues: S-adenosylmethionine:tRNA ribosyltransferase-isomerase (345 aa).

This sequence belongs to the QueA family. In terms of assembly, monomer.

It is found in the cytoplasm. The enzyme catalyses 7-aminomethyl-7-carbaguanosine(34) in tRNA + S-adenosyl-L-methionine = epoxyqueuosine(34) in tRNA + adenine + L-methionine + 2 H(+). It participates in tRNA modification; tRNA-queuosine biosynthesis. Transfers and isomerizes the ribose moiety from AdoMet to the 7-aminomethyl group of 7-deazaguanine (preQ1-tRNA) to give epoxyqueuosine (oQ-tRNA). The sequence is that of S-adenosylmethionine:tRNA ribosyltransferase-isomerase from Thermus thermophilus (strain ATCC BAA-163 / DSM 7039 / HB27).